The following is a 447-amino-acid chain: Na(+)/H(+) antiporter NhaA 2 (447 aa).

Transmembrane regions (helical) follow at residues 34 to 54 (VGGV…NSPW), 77 to 97 (LTLG…VVGL), 115 to 135 (ALPI…FVLV), 146 to 166 (GWAI…AVIG), 176 to 196 (FLLT…AVFY), 200 to 220 (INGL…LCVQ), 290 to 310 (VSAG…SIGG), 321 to 341 (PITL…IVLT), 359 to 379 (WVDV…SLLI), and 393 to 413 (FVKI…AVVL).

This sequence belongs to the NhaA Na(+)/H(+) (TC 2.A.33) antiporter family.

The protein resides in the cell membrane. It carries out the reaction Na(+)(in) + 2 H(+)(out) = Na(+)(out) + 2 H(+)(in). Na(+)/H(+) antiporter that extrudes sodium in exchange for external protons. The chain is Na(+)/H(+) antiporter NhaA 2 from Mycolicibacterium gilvum (strain PYR-GCK) (Mycobacterium gilvum (strain PYR-GCK)).